Reading from the N-terminus, the 543-residue chain is Proline--tRNA ligase, chloroplastic/mitochondrial (543 aa).

Residues 41 to 63 (ATAPSGTASPETKSSEVDRLRSD) are disordered. The segment covering 53-63 (KSSEVDRLRSD) has biased composition (basic and acidic residues).

Belongs to the class-II aminoacyl-tRNA synthetase family.

It is found in the plastid. The protein localises to the chloroplast. It localises to the mitochondrion. It catalyses the reaction tRNA(Pro) + L-proline + ATP = L-prolyl-tRNA(Pro) + AMP + diphosphate. Catalyzes the attachment of proline to tRNA(Pro) in a two-step reaction: proline is first activated by ATP to form Pro-AMP and then transferred to the acceptor end of tRNA(Pro). The sequence is that of Proline--tRNA ligase, chloroplastic/mitochondrial from Arabidopsis thaliana (Mouse-ear cress).